Consider the following 161-residue polypeptide: Globin CTT-VIIB-4 (161 aa).

Residues 1-16 (MKFFAVLALCIVGAIA) form the signal peptide. In terms of domain architecture, Globin spans 18–161 (PLTADEASLV…NTMAVAVAHL (144 aa)). Positions 76 and 111 each coordinate heme b.

Belongs to the globin family. In terms of assembly, homodimer.

The sequence is that of Globin CTT-VIIB-4 (CTT-7B4) from Chironomus thummi thummi (Midge).